Reading from the N-terminus, the 428-residue chain is Glutamate--tRNA ligase 2 (428 aa).

The short motif at 6–16 (PSPTGDMRTEQ) is the 'HIGH' region element.

Belongs to the class-I aminoacyl-tRNA synthetase family. Glutamate--tRNA ligase type 1 subfamily. In terms of assembly, monomer.

It is found in the cytoplasm. The enzyme catalyses tRNA(Glu) + L-glutamate + ATP = L-glutamyl-tRNA(Glu) + AMP + diphosphate. Its function is as follows. Catalyzes the attachment of glutamate to tRNA(Glu) in a two-step reaction: glutamate is first activated by ATP to form Glu-AMP and then transferred to the acceptor end of tRNA(Glu). The sequence is that of Glutamate--tRNA ligase 2 from Sulfurovum sp. (strain NBC37-1).